The sequence spans 593 residues: Aspartate--tRNA ligase (593 aa).

E180 is a binding site for L-aspartate. Positions 204-207 are aspartate; that stretch reads QIFK. L-aspartate is bound at residue R226. ATP contacts are provided by residues 226–228 and Q235; that span reads RDE. H453 is an L-aspartate binding site. E487 contacts ATP. Residue R494 coordinates L-aspartate. Residue 539 to 542 participates in ATP binding; the sequence is GLDR.

The protein belongs to the class-II aminoacyl-tRNA synthetase family. Type 1 subfamily. As to quaternary structure, homodimer.

Its subcellular location is the cytoplasm. The catalysed reaction is tRNA(Asp) + L-aspartate + ATP = L-aspartyl-tRNA(Asp) + AMP + diphosphate. In terms of biological role, catalyzes the attachment of L-aspartate to tRNA(Asp) in a two-step reaction: L-aspartate is first activated by ATP to form Asp-AMP and then transferred to the acceptor end of tRNA(Asp). The sequence is that of Aspartate--tRNA ligase from Clostridium botulinum (strain Okra / Type B1).